Here is a 570-residue protein sequence, read N- to C-terminus: Phosphoenolpyruvate-protein phosphotransferase (570 aa).

H189 acts as the Tele-phosphohistidine intermediate in catalysis. R296 and R332 together coordinate phosphoenolpyruvate. Positions 431 and 455 each coordinate Mg(2+). Residues 454–455 and R465 contribute to the phosphoenolpyruvate site; that span reads ND. The Proton donor role is filled by C502.

The protein belongs to the PEP-utilizing enzyme family. In terms of assembly, homodimer. Interacts with FloT. The cofactor is Mg(2+).

The protein resides in the cytoplasm. It is found in the membrane raft. It carries out the reaction L-histidyl-[protein] + phosphoenolpyruvate = N(pros)-phospho-L-histidyl-[protein] + pyruvate. Its function is as follows. General (non sugar-specific) component of the phosphoenolpyruvate-dependent sugar phosphotransferase system (sugar PTS). This major carbohydrate active-transport system catalyzes the phosphorylation of incoming sugar substrates concomitantly with their translocation across the cell membrane. Enzyme I transfers the phosphoryl group from phosphoenolpyruvate (PEP) to the phosphoryl carrier protein (HPr). This is Phosphoenolpyruvate-protein phosphotransferase (ptsI) from Bacillus subtilis (strain 168).